The sequence spans 169 residues: 6,7-dimethyl-8-ribityllumazine synthase (169 aa).

5-amino-6-(D-ribitylamino)uracil contacts are provided by residues Phe24, 58–60 (ALE), and 82–84 (AVV). (2S)-2-hydroxy-3-oxobutyl phosphate is bound at residue 87 to 88 (ET). Residue His90 is the Proton donor of the active site. A 5-amino-6-(D-ribitylamino)uracil-binding site is contributed by Asn115. Arg129 provides a ligand contact to (2S)-2-hydroxy-3-oxobutyl phosphate.

Belongs to the DMRL synthase family.

It carries out the reaction (2S)-2-hydroxy-3-oxobutyl phosphate + 5-amino-6-(D-ribitylamino)uracil = 6,7-dimethyl-8-(1-D-ribityl)lumazine + phosphate + 2 H2O + H(+). Its pathway is cofactor biosynthesis; riboflavin biosynthesis; riboflavin from 2-hydroxy-3-oxobutyl phosphate and 5-amino-6-(D-ribitylamino)uracil: step 1/2. Functionally, catalyzes the formation of 6,7-dimethyl-8-ribityllumazine by condensation of 5-amino-6-(D-ribitylamino)uracil with 3,4-dihydroxy-2-butanone 4-phosphate. This is the penultimate step in the biosynthesis of riboflavin. The chain is 6,7-dimethyl-8-ribityllumazine synthase from Cupriavidus metallidurans (strain ATCC 43123 / DSM 2839 / NBRC 102507 / CH34) (Ralstonia metallidurans).